The chain runs to 207 residues: Cyclic di-AMP synthase CdaS (207 aa).

Residues 13 to 37 (AFKGKIQVYLEQILGDASLILKTLH) adopt a coiled-coil conformation. The region spanning 63–205 (SFYLQSYIEE…DGVLYPLISP (143 aa)) is the DAC domain.

This sequence belongs to the adenylate cyclase family. DacB/CdaS subfamily. In terms of assembly, forms dimers and probably also hexamers; the dimer may be active while the hexamer may not be active.

It carries out the reaction 2 ATP = 3',3'-c-di-AMP + 2 diphosphate. Its function is as follows. One of 3 paralogous diadenylate cyclases (DAC) in this bacteria, catalyzing the condensation of 2 ATP molecules into cyclic di-AMP (c-di-AMP). Upon expression in E.coli leads to c-di-AMP synthesis. Overexpression of the hyperactive mutant (L44F) in the absence of c-di-AMP phosphodiesterase GdpP leads to growth defects in log phase (long curly cell filaments) that disappear upon sporulation; spore formation is normal, showing sporulation is insensitive to the excess c-di-AMP. In B.subtilis c-di-AMP is a second messenger that mediates growth, DNA repair and cell wall homeostasis; it is toxic when present in excess. The sequence is that of Cyclic di-AMP synthase CdaS from Bacillus subtilis (strain 168).